Here is a 241-residue protein sequence, read N- to C-terminus: Small ribosomal subunit protein uS2 (241 aa).

This sequence belongs to the universal ribosomal protein uS2 family.

The sequence is that of Small ribosomal subunit protein uS2 from Escherichia coli (strain 55989 / EAEC).